A 136-amino-acid polypeptide reads, in one-letter code: DNA-directed RNA polymerase subunit omega (136 aa).

The protein belongs to the RNA polymerase subunit omega family. As to quaternary structure, the RNAP catalytic core consists of 2 alpha, 1 beta, 1 beta' and 1 omega subunit. When a sigma factor is associated with the core the holoenzyme is formed, which can initiate transcription.

The catalysed reaction is RNA(n) + a ribonucleoside 5'-triphosphate = RNA(n+1) + diphosphate. Functionally, promotes RNA polymerase assembly. Latches the N- and C-terminal regions of the beta' subunit thereby facilitating its interaction with the beta and alpha subunits. The sequence is that of DNA-directed RNA polymerase subunit omega from Methylorubrum extorquens (strain CM4 / NCIMB 13688) (Methylobacterium extorquens).